The primary structure comprises 152 residues: Large ribosomal subunit protein bL17 (152 aa).

The interval Ala121–Ser140 is disordered.

Belongs to the bacterial ribosomal protein bL17 family. Part of the 50S ribosomal subunit. Contacts protein L32.

This Pelodictyon phaeoclathratiforme (strain DSM 5477 / BU-1) protein is Large ribosomal subunit protein bL17.